We begin with the raw amino-acid sequence, 862 residues long: Alpha,alpha-trehalose-phosphate synthase [UDP-forming] 5 (862 aa).

Phosphoserine is present on Ser-5. Phosphothreonine is present on Thr-32. The tract at residues 60-546 (DRIIIVGNQL…ARSFIQDLER (487 aa)) is glycosyltransferase.

This sequence in the N-terminal section; belongs to the glycosyltransferase 20 family. In the C-terminal section; belongs to the trehalose phosphatase family. Binds to the phosphopeptide-binding site of GRF/14-3-3 and to MBF1c. Both Ser-5 and Thr-32 must be phosphorylated for binding to GRF/14-3-3. Low expression in leaves, stems, flower buds, flowers and siliques.

It catalyses the reaction D-glucose 6-phosphate + UDP-alpha-D-glucose = alpha,alpha-trehalose 6-phosphate + UDP + H(+). The polypeptide is Alpha,alpha-trehalose-phosphate synthase [UDP-forming] 5 (TPS5) (Arabidopsis thaliana (Mouse-ear cress)).